We begin with the raw amino-acid sequence, 285 residues long: ATP synthase gamma chain (285 aa).

This sequence belongs to the ATPase gamma chain family. In terms of assembly, F-type ATPases have 2 components, CF(1) - the catalytic core - and CF(0) - the membrane proton channel. CF(1) has five subunits: alpha(3), beta(3), gamma(1), delta(1), epsilon(1). CF(0) has three main subunits: a, b and c.

It is found in the cell membrane. Produces ATP from ADP in the presence of a proton gradient across the membrane. The gamma chain is believed to be important in regulating ATPase activity and the flow of protons through the CF(0) complex. The sequence is that of ATP synthase gamma chain from Halalkalibacterium halodurans (strain ATCC BAA-125 / DSM 18197 / FERM 7344 / JCM 9153 / C-125) (Bacillus halodurans).